The following is a 250-amino-acid chain: Coproheme decarboxylase (250 aa).

Fe-coproporphyrin III-binding positions include Arg131, 145 to 149, His172, and Gln185; that span reads YPMNK. Residue Tyr145 is part of the active site.

It belongs to the ChdC family. Type 1 subfamily. The cofactor is Fe-coproporphyrin III.

It catalyses the reaction Fe-coproporphyrin III + 2 H2O2 + 2 H(+) = heme b + 2 CO2 + 4 H2O. It carries out the reaction Fe-coproporphyrin III + H2O2 + H(+) = harderoheme III + CO2 + 2 H2O. The enzyme catalyses harderoheme III + H2O2 + H(+) = heme b + CO2 + 2 H2O. The protein operates within porphyrin-containing compound metabolism; protoheme biosynthesis. In terms of biological role, involved in coproporphyrin-dependent heme b biosynthesis. Catalyzes the decarboxylation of Fe-coproporphyrin III (coproheme) to heme b (protoheme IX), the last step of the pathway. The reaction occurs in a stepwise manner with a three-propionate intermediate. This Staphylococcus aureus (strain USA300 / TCH1516) protein is Coproheme decarboxylase.